An 87-amino-acid chain; its full sequence is Small ribosomal subunit protein bS20 (87 aa).

A compositionally biased stretch (basic residues) spans 1–11; that stretch reads MANIKSAKKRA. The interval 1–27 is disordered; sequence MANIKSAKKRAVQSEKRRQHNASQRSM.

Belongs to the bacterial ribosomal protein bS20 family.

Its function is as follows. Binds directly to 16S ribosomal RNA. The sequence is that of Small ribosomal subunit protein bS20 from Actinobacillus succinogenes (strain ATCC 55618 / DSM 22257 / CCUG 43843 / 130Z).